We begin with the raw amino-acid sequence, 380 residues long: uncharacterized protein (380 aa).

This is an uncharacterized protein from Gallid herpesvirus 2 (strain GA) (GaHV-2).